Reading from the N-terminus, the 656-residue chain is 1-deoxy-D-xylulose-5-phosphate synthase 1 (656 aa).

Thiamine diphosphate-binding positions include histidine 73 and 113 to 115 (SHA). Mg(2+) is bound at residue aspartate 144. Residues 145–146 (GA), asparagine 174, tyrosine 285, and glutamate 367 contribute to the thiamine diphosphate site. Mg(2+) is bound at residue asparagine 174. A disordered region spans residues 625-656 (AGDRAGGPAVEQPGDGRMSGDGRIVMPAQGEN).

It belongs to the transketolase family. DXPS subfamily. Homodimer. It depends on Mg(2+) as a cofactor. Thiamine diphosphate is required as a cofactor.

It catalyses the reaction D-glyceraldehyde 3-phosphate + pyruvate + H(+) = 1-deoxy-D-xylulose 5-phosphate + CO2. The protein operates within metabolic intermediate biosynthesis; 1-deoxy-D-xylulose 5-phosphate biosynthesis; 1-deoxy-D-xylulose 5-phosphate from D-glyceraldehyde 3-phosphate and pyruvate: step 1/1. In terms of biological role, catalyzes the acyloin condensation reaction between C atoms 2 and 3 of pyruvate and glyceraldehyde 3-phosphate to yield 1-deoxy-D-xylulose-5-phosphate (DXP). This chain is 1-deoxy-D-xylulose-5-phosphate synthase 1, found in Streptomyces coelicolor (strain ATCC BAA-471 / A3(2) / M145).